The sequence spans 810 residues: DNA replication licensing factor mcm-6 (810 aa).

The MCM domain occupies 346-553 (IEKNIVDSLF…VTDYAIARRI (208 aa)). 6 residues coordinate ATP: Ser-400, Thr-401, Ala-402, Lys-403, Ser-404, and Asn-505. The Arginine finger signature appears at 529-532 (SRFD). 2 residues coordinate ADP: Arg-622 and Glu-625. A disordered region spans residues 685 to 705 (KENQGGDDDMEHDGEKDETAK).

It belongs to the MCM family. As to quaternary structure, component of the mcm2-7 complex. The complex forms a toroidal hexameric ring with the proposed subunit order mcm2-mcm6-mcm4-mcm7-mcm3-mcm5 (By simililarity).

Its subcellular location is the nucleus. It carries out the reaction ATP + H2O = ADP + phosphate + H(+). In terms of biological role, acts as a component of the MCM2-7 complex (MCM complex) which is the replicative helicase essential for 'once per cell cycle' DNA replication initiation and elongation in eukaryotic cells. Core component of CDC45-MCM-GINS (CMG) helicase, the molecular machine that unwinds template DNA during replication, and around which the replisome is built. The active ATPase sites in the MCM2-7 ring are formed through the interaction surfaces of two neighboring subunits such that a critical structure of a conserved arginine finger motif is provided in trans relative to the ATP-binding site of the Walker A box of the adjacent subunit. The six ATPase active sites, however, are likely to contribute differentially to the complex helicase activity. The sequence is that of DNA replication licensing factor mcm-6 from Caenorhabditis briggsae.